The primary structure comprises 426 residues: GATA type zinc finger protein asd-4 (426 aa).

The GATA-type zinc finger occupies C16–C40. Disordered stretches follow at residues R70–I143 and P159–E178. Positions P104–R113 are enriched in low complexity. The segment covering S128–V138 has biased composition (polar residues). Residues Q182–R292 adopt a coiled-coil conformation. Residues V306 to P318 show a composition bias toward low complexity. A disordered region spans residues V306–S426. Residues A335–E353 show a composition bias toward pro residues. Over residues P354–E419 the composition is skewed to low complexity.

Homotetramer.

The protein resides in the nucleus. In terms of biological role, transcriptional regulator that functions in sexual development; disruption of asd-4 gene results in agenesis of ascus and ascospore with macroscopically normal fruiting body formation. The GATA-type zinc finger domain binds to DNA sequences from its own promoter region. This is GATA type zinc finger protein asd-4 (asd-4) from Neurospora crassa (strain ATCC 24698 / 74-OR23-1A / CBS 708.71 / DSM 1257 / FGSC 987).